Reading from the N-terminus, the 93-residue chain is UPF0223 protein LACR_0546 (93 aa).

The protein belongs to the UPF0223 family.

The sequence is that of UPF0223 protein LACR_0546 from Lactococcus lactis subsp. cremoris (strain SK11).